The following is an 857-amino-acid chain: Inactive rhomboid protein 1 (857 aa).

At M1 to T413 the chain is on the cytoplasmic side. Positions F283–S307 are disordered. Over residues T290–D300 the composition is skewed to basic and acidic residues. The helical transmembrane segment at F414–F434 threads the bilayer. Topologically, residues S435–S661 are lumenal. N-linked (GlcNAc...) asparagine glycosylation is present at N585. The chain crosses the membrane as a helical span at residues L662–L682. Topologically, residues R683–R693 are cytoplasmic. A helical membrane pass occupies residues I694 to P714. Over Y715–R716 the chain is Lumenal. A helical membrane pass occupies residues A717–I737. Over Q738 to R748 the chain is Cytoplasmic. Residues A749 to I769 traverse the membrane as a helical segment. Over D770–H774 the chain is Lumenal. A helical transmembrane segment spans residues I775–G795. At R796 to Q805 the chain is on the cytoplasmic side. Residues I806–V826 traverse the membrane as a helical segment. The Lumenal segment spans residues H827–H857.

Belongs to the peptidase S54 family.

It localises to the endoplasmic reticulum membrane. Its subcellular location is the golgi apparatus membrane. Regulates ADAM17 protease, a sheddase of the epidermal growth factor (EGF) receptor ligands and TNF, thereby plays a role in sleep, cell survival, proliferation, migration and inflammation. Does not exhibit any protease activity on its own. This is Inactive rhomboid protein 1 (rhbdf1) from Danio rerio (Zebrafish).